The following is a 902-amino-acid chain: Calcium-activated chloride channel regulator 3A-1 (902 aa).

The N-terminal stretch at 1–21 (MVPGLQVLLFLTLHLLQNTES) is a signal peptide. The metalloprotease domain stretch occupies residues 45–199 (DERLIPSIKE…RITGTNVVHN (155 aa)). N-linked (GlcNAc...) asparagine glycosylation is present at N75. Position 155 (H155) interacts with Zn(2+). Residue E156 is part of the active site. Residues H159 and D166 each coordinate Zn(2+). Positions 308–476 (VVCLVLDKSG…NSLIDAFSRI (169 aa)) constitute a VWFA domain. N-linked (GlcNAc...) asparagine glycans are attached at residues N504, N515, N630, N687, N697, N809, and N814.

This sequence belongs to the CLCR family. In terms of assembly, part of a complex composed of complement component C3, CLCA1/CLCA3, A2ML1/OH and ALB/serum albumin. In terms of processing, glycosylated. The 130-kDa product is autoproteolytically processed by the metalloprotease domain and yields two subunits, a 90-kDa protein and a group of 32- to 38-kDa proteins. The cleavage is necessary for calcium-activated chloride channel (CaCC) activation activity. As to expression, highly expressed in skin and spleen, and at lower levels in kidney and liver. Also detected in lung and brain. Not detected in lung or brain. In lung, localizes to respiratory epithelia of the bronchi and trachea and the submucosal glands.

Its subcellular location is the cell membrane. Functionally, plays a role in modulating chloride current across the plasma membrane in a calcium-dependent manner. In Mus musculus (Mouse), this protein is Calcium-activated chloride channel regulator 3A-1.